Here is a 374-residue protein sequence, read N- to C-terminus: LRR repeats and ubiquitin-like domain-containing protein At2g30105 (374 aa).

Residues 13–87 form the Ubiquitin-like domain; the sequence is IKLTVKFGGK…LMLMASQGLH (75 aa). LRR repeat units lie at residues 128–151, 152–175, 177–200, 201–224, 225–248, 250–270, 272–293, 294–316, and 318–340; these read WKAT…VWDC, GSGV…ISSF, SMQK…GIAS, LKRL…MGSL, TSLR…GLLT, LEIL…IGNC, FLME…FTKL, RNLK…LFKM, and LQLS…QFEG.

The chain is LRR repeats and ubiquitin-like domain-containing protein At2g30105 from Arabidopsis thaliana (Mouse-ear cress).